The following is a 539-amino-acid chain: CTP synthase (539 aa).

Positions 1-272 (MTLRSKMTKY…AQIILSHFKI (272 aa)) are amidoligase domain. Position 19 (S19) interacts with CTP. Residue S19 participates in UTP binding. 20–25 (GLGKGV) provides a ligand contact to ATP. Y60 serves as a coordination point for L-glutamine. D77 serves as a coordination point for ATP. Residues D77 and E147 each contribute to the Mg(2+) site. CTP-binding positions include 154–156 (DIE), 193–198 (KSKPTQ), and K229. Residues 193–198 (KSKPTQ) and K229 each bind UTP. The Glutamine amidotransferase type-1 domain maps to 298–539 (KILMVGKYVE…SFLRVLIKNN (242 aa)). Residue G360 participates in L-glutamine binding. C387 acts as the Nucleophile; for glutamine hydrolysis in catalysis. L-glutamine-binding positions include 388–391 (LGFQ), E410, and R469. Active-site residues include H514 and E516.

This sequence belongs to the CTP synthase family. Homotetramer.

It catalyses the reaction UTP + L-glutamine + ATP + H2O = CTP + L-glutamate + ADP + phosphate + 2 H(+). The catalysed reaction is L-glutamine + H2O = L-glutamate + NH4(+). The enzyme catalyses UTP + NH4(+) + ATP = CTP + ADP + phosphate + 2 H(+). It functions in the pathway pyrimidine metabolism; CTP biosynthesis via de novo pathway; CTP from UDP: step 2/2. Its activity is regulated as follows. Allosterically activated by GTP, when glutamine is the substrate; GTP has no effect on the reaction when ammonia is the substrate. The allosteric effector GTP functions by stabilizing the protein conformation that binds the tetrahedral intermediate(s) formed during glutamine hydrolysis. Inhibited by the product CTP, via allosteric rather than competitive inhibition. Functionally, catalyzes the ATP-dependent amination of UTP to CTP with either L-glutamine or ammonia as the source of nitrogen. Regulates intracellular CTP levels through interactions with the four ribonucleotide triphosphates. The polypeptide is CTP synthase (Mycoplasmopsis pulmonis (strain UAB CTIP) (Mycoplasma pulmonis)).